The sequence spans 349 residues: MSSLSGKVQTVLGLVEPSKLGRTLTHEHLAMTFDCCYCPPPPCQEAISKEPIVMKNLYWIQKNAYSHKENLQLNQETEAIKEELLYFKANGGGALVENTTTGISRDTQTLKRLAEETGVHIISGAGFYVDATHSSETRAMSVEQLTDVLMNGILHGADGTSIKCGVIGEIGCSWPLTESERKVLQATAHAQAQLGCPVIIHPGRSSRAPFQIIRILQEAGADISKTVMSHLDRTILDKKELLEFAQLGCYSEYDLFGTELLHYQLGPDIDMPDDNKRIRRVRLLVEEGYEDRILVAHDIHTKTRLMKYGGHGYSHILTNVVPKMLLRGITENVLDKILIENPKQWLTFK.

Residues His-26, His-28, Glu-169, His-201, His-230, and Asp-298 each contribute to the a divalent metal cation site.

This sequence belongs to the metallo-dependent hydrolases superfamily. Phosphotriesterase family. Requires a divalent metal cation as cofactor.

The protein resides in the cytoplasm. The protein localises to the cytosol. The catalysed reaction is N-acetyltaurine + H2O = taurine + acetate. It carries out the reaction N-propanoyltaurine + H2O = propanoate + taurine. It catalyses the reaction N-acetyl-L-methionine + H2O = L-methionine + acetate. The enzyme catalyses N-acetyl-L-isoleucine + H2O = L-isoleucine + acetate. The catalysed reaction is N-acetyl-L-leucine + H2O = L-leucine + acetate. It carries out the reaction N-acetyl-L-valine + H2O = L-valine + acetate. N-acetyltaurine hydrolase that regulates feeding by catalyzing the hydrolysis of N-acetyltaurine into taurine and acetate. N-acetyltaurine has anorexigenic and anti-obesity effects that are dependent on GFRAL receptor and GDF15. PTER also acts on other N-acetyl amino acids (Met, Ile, Leu, Val) and N-propionyltaurine, but at lower rates. The sequence is that of N-acetyltaurine hydrolase from Pongo abelii (Sumatran orangutan).